A 268-amino-acid chain; its full sequence is MPRSFLVKKHFNASKKPNYSELDTHTVIISPCLYEGYPVPVIPQPEVLRSGAYSPIAVWTTASPFHAPLPAGLSPLSGYPASLGRVSPPPPSDTSSKDHSGSESPISDEEERLQSKLSDPHAIEAEKFQCNLCNKTYSTFSGLGKHKQLHCDAQSRKSFSCKYCDKEYVSLGALKMHIRTHTLPCVCKICGKAFSRPWLLQGHIRTHTGEKPFSCSHCSRAFADRSNLRAHLQTHSDVKKYQCKSCSKTFSRMSLLHKHEESGCCAAH.

Positions Met1–Ser20 are SNAG domain. The disordered stretch occupies residues Pro80 to Leu117. 4 consecutive C2H2-type zinc fingers follow at residues Phe128 to His150, Phe159 to His181, Cys185 to His207, and Phe213 to His235. A C2H2-type 5; atypical zinc finger spans residues Tyr241–Cys264.

The protein belongs to the snail C2H2-type zinc-finger protein family. Interacts (via SNAG domain) with LIMD1 (via LIM domains), WTIP (via LIM domains) and AJUBA (via LIM domains). Interacts (via zinc fingers) with KPNA2, KPNB1, and TNPO1. May interact (via zinc fingers) with IPO7. Post-translationally, phosphorylated by GSK3B. Once phosphorylated, it becomes a target for ubiquitination. In terms of processing, ubiquitinated by the SCF(FBXO11) complex; ubiquitination requires previous GSK3B-mediated SNAI2 phosphorylation.

It is found in the nucleus. The protein resides in the cytoplasm. Functionally, transcriptional repressor that modulates both activator-dependent and basal transcription. Involved in the generation and migration of neural crest cells. Plays a role in mediating RAF1-induced transcriptional repression of the TJ protein, occludin (OCLN) and subsequent oncogenic transformation of epithelial cells. Represses BRCA2 expression by binding to its E2-box-containing silencer and recruiting CTBP1 and HDAC1 in breast cells. In epidermal keratinocytes, binds to the E-box in ITGA3 promoter and represses its transcription. Involved in the regulation of ITGB1 and ITGB4 expression and cell adhesion and proliferation in epidermal keratinocytes. Binds to E-box2 domain of BSG and activates its expression during TGFB1-induced epithelial-mesenchymal transition (EMT) in hepatocytes. Represses E-Cadherin/CDH1 transcription via E-box elements. Involved in osteoblast maturation. Binds to RUNX2 and SOC9 promoters and may act as a positive and negative transcription regulator, respectively, in osteoblasts. Binds to CXCL12 promoter via E-box regions in mesenchymal stem cells and osteoblasts. Plays an essential role in TWIST1-induced EMT and its ability to promote invasion and metastasis. The sequence is that of Zinc finger protein SNAI2 (SNAI2) from Bos taurus (Bovine).